Consider the following 594-residue polypeptide: Estrogen receptor (594 aa).

The segment at methionine 1 to tyrosine 184 is modulating (transactivation AF-1); mediates interaction with MACROD1. Serine 10 carries O-linked (GlcNAc) serine glycosylation. A required for interaction with NCOA1 region spans residues leucine 35–serine 47. An interaction with DDX5; self-association region spans residues leucine 35 to methionine 174. Serine 104 and serine 106 each carry phosphoserine; by CDK2. Serine 118 is subject to Phosphoserine. Positions proline 152–serine 173 are disordered. The span at alanine 154–leucine 165 shows a compositional bias: basic and acidic residues. Phosphoserine; by CK2 is present on serine 167. 2 NR C4-type zinc fingers span residues cysteine 185 to cysteine 205 and cysteine 221 to cysteine 245. Residues cysteine 185 to methionine 250 constitute a DNA-binding region (nuclear receptor). Positions cysteine 185 to leucine 310 are mediates interaction with DNTTIP2. A hinge region spans residues methionine 251 to leucine 310. The segment covering lysine 257–arginine 269 has biased composition (basic residues). Residues lysine 257–proline 293 are disordered. Position 260 is an asymmetric dimethylarginine; by PRMT1 (arginine 260). Residues glycine 262 to isoleucine 594 are interaction with AKAP13. Residues methionine 264 to isoleucine 594 are self-association. Residues glutamine 270–proline 288 show a composition bias toward basic and acidic residues. The NR LBD domain maps to threonine 311–histidine 546. The segment at threonine 311 to isoleucine 594 is transactivation AF-2. 17beta-estradiol is bound by residues glutamate 353 and arginine 394. A lipid anchor (S-palmitoyl cysteine) is attached at cysteine 447. 17beta-estradiol is bound at residue histidine 523. Tyrosine 536 carries the phosphotyrosine; by Tyr-kinases modification. Positions proline 551–proline 575 are disordered. The segment covering glutamate 561–proline 575 has biased composition (polar residues). Residue threonine 570 is glycosylated (O-linked (GlcNAc) threonine).

The protein belongs to the nuclear hormone receptor family. NR3 subfamily. Binds DNA as a homodimer. Can form a heterodimer with ESR2. Interacts with coactivator NCOA5. Interacts with PELP1, the interaction is enhanced by 17-beta-estradiol; the interaction increases ESR1 transcriptional activity. Interacts with NCOA7; the interaction is ligand-inducible. Interacts with AKAP13, CUEDC2, HEXIM1, KDM5A, MAP1S, SMARD1, and UBE1C. Interacts with MUC1; the interaction is stimulated by 7 beta-estradiol (E2) and enhances ESR1-mediated transcription. Interacts with DNTTIP2, and UIMC1. Interacts with KMT2D/MLL2. Interacts with ATAD2; the interaction is enhanced by estradiol. Interacts with KIF18A and LDB1. Interacts with RLIM (via its C-terminus). Interacts with MACROD1. Interacts with SH2D4A and PLCG. Interacts with SH2D4A; the interaction blocks binding to PLCG and inhibits estrogen-induced cell proliferation. Interacts with DYNLL1. Interacts with CCDC62; the interaction requires estradiol and appears to enhance the transcription of target genes. Interacts with NR2C1; the interaction prevents homodimerization of ESR1 and suppresses its transcriptional activity and cell growth. Interacts with DNAAF4. Interacts with PRMT2. Interacts with RBFOX2. Interacts with EP300; the interaction is estrogen-dependent and enhanced by CITED1. Interacts with CITED1; the interaction is estrogen-dependent. Interacts with FAM120B, FOXL2, PHB2 and SLC30A9. Interacts with coactivators NCOA3 and NCOA6. Interacts with STK3/MST2 only in the presence of SAV1 and vice-versa. Binds to CSNK1D. Interacts with NCOA2; NCOA2 can interact with ESR1 AF-1 and AF-2 domains simultaneously and mediate their transcriptional synergy. Interacts with DDX5. Interacts with NCOA1; the interaction seems to require a self-association of N-terminal and C-terminal regions. Interacts with ZNF366, DDX17, NFKB1, RELA, SP1 and SP3. Interacts with NRIP1. Interacts with GPER1; the interaction occurs in an estrogen-dependent manner. Interacts with CLOCK and the interaction is stimulated by estrogen. Interacts with TRIP4 (ufmylated); estrogen dependent. Interacts with LMTK3; the interaction phosphorylates ESR1 (in vitro) and protects it against proteasomal degradation. Interacts with CCAR2 (via N-terminus) in a ligand-independent manner. Interacts with ZFHX3. Interacts with SFR1 in a ligand-dependent and -independent manner. Interacts with DCAF13, LATS1 and DCAF1; regulates ESR1 ubiquitination and ubiquitin-mediated proteasomal degradation. Interacts (via DNA-binding domain) with POU4F2 (C-terminus); this interaction increases the estrogen receptor ESR1 transcriptional activity in a DNA- and ligand 17-beta-estradiol-independent manner. Interacts with ESRRB isoform 1. Interacts with UBE3A and WBP2. Interacts with GTF2B. Interacts with RBM39. In the absence of hormonal ligand, interacts with TACC1. Interacts with PI3KR1 or PI3KR2 and PTK2/FAK1. Interacts with SRC. Interacts with BAG1; the interaction is promoted in the absence of estradiol (17-beta-estradiol/E2). Interacts with and ubiquitinated by STUB1; the interaction is promoted in the absence of estradiol (17-beta-estradiol/E2). Interacts with NEDD8. In terms of processing, ubiquitinated; regulated by LATS1 via DCAF1 it leads to ESR1 proteasomal degradation. Deubiquitinated by OTUB1. Ubiquitinated by STUB1/CHIP; in the CA1 hippocampal region following loss of endogenous circulating estradiol (17-beta-estradiol/E2). Ubiquitinated by UBR5, leading to its degradation: UBR5 specifically recognizes and binds ligand-bound ESR1 when it is not associated with coactivators (NCOAs). In presence of NCOAs, the UBR5-degron is not accessible, preventing its ubiquitination and degradation. Post-translationally, phosphorylated by cyclin A/CDK2 and CK1. Phosphorylation probably enhances transcriptional activity. Dephosphorylation at Ser-118 by PPP5C inhibits its transactivation activity. Phosphorylated by LMTK3 (in vitro). Palmitoylated at Cys-447 by ZDHHC7 and ZDHHC21. Palmitoylation is required for plasma membrane targeting and for rapid intracellular signaling via ERK and AKT kinases and cAMP generation, but not for signaling mediated by the nuclear hormone receptor. In terms of processing, dimethylated by PRMT1 at Arg-260. The methylation may favor cytoplasmic localization. Demethylated by JMJD6 at Arg-260.

Its subcellular location is the nucleus. The protein localises to the cytoplasm. It is found in the golgi apparatus. The protein resides in the cell membrane. Its function is as follows. Nuclear hormone receptor. The steroid hormones and their receptors are involved in the regulation of eukaryotic gene expression and affect cellular proliferation and differentiation in target tissues. Ligand-dependent nuclear transactivation involves either direct homodimer binding to a palindromic estrogen response element (ERE) sequence or association with other DNA-binding transcription factors, such as AP-1/c-Jun, c-Fos, ATF-2, Sp1 and Sp3, to mediate ERE-independent signaling. Ligand binding induces a conformational change allowing subsequent or combinatorial association with multiprotein coactivator complexes through LXXLL motifs of their respective components. Mutual transrepression occurs between the estrogen receptor (ER) and NF-kappa-B in a cell-type specific manner. Decreases NF-kappa-B DNA-binding activity and inhibits NF-kappa-B-mediated transcription from the IL6 promoter and displace RELA/p65 and associated coregulators from the promoter. Recruited to the NF-kappa-B response element of the CCL2 and IL8 promoters and can displace CREBBP. Present with NF-kappa-B components RELA/p65 and NFKB1/p50 on ERE sequences. Can also act synergistically with NF-kappa-B to activate transcription involving respective recruitment adjacent response elements; the function involves CREBBP. Can activate the transcriptional activity of TFF1. Also mediates membrane-initiated estrogen signaling involving various kinase cascades. Essential for MTA1-mediated transcriptional regulation of BRCA1 and BCAS3. Maintains neuronal survival in response to ischemic reperfusion injury when in the presence of circulating estradiol (17-beta-estradiol/E2). The sequence is that of Estrogen receptor (ESR1) from Equus caballus (Horse).